Consider the following 701-residue polypeptide: Protein SOSEKI 1 (701 aa).

The interval 8 to 101 (LSAQVLYQLS…YVLRASELID (94 aa)) is DIX-like oligomerization domain. Disordered stretches follow at residues 238-262 (STVH…FSPG), 300-329 (LPPN…SLNE), 366-389 (PYNT…YRTK), and 538-575 (IASS…LASP). Residues 306–319 (STHEDNSFWRDSRS) show a composition bias toward basic and acidic residues. The segment at 658–687 (ILQECSICRRTFKPDSLQVHMRGCHPPQYA) adopts a C2HC/C3H-type zinc-finger fold. Zn(2+) is bound by residues cysteine 662, cysteine 665, histidine 677, and cysteine 681.

Belongs to the SOSEKI family. Homodimer. Forms long polymer filaments with other SOKs proteins polymers crucial for polar localization and biological activity. Zn(2+) is required as a cofactor.

Its subcellular location is the cell membrane. In terms of biological role, SOSEKI proteins locally interpret global polarity cues and can influence cell division orientation to coordinate cell polarization relative to body axes. The protein is Protein SOSEKI 1 of Physcomitrium patens (Spreading-leaved earth moss).